Consider the following 91-residue polypeptide: DNA-directed RNA polymerase subunit omega (91 aa).

This sequence belongs to the RNA polymerase subunit omega family. As to quaternary structure, the RNAP catalytic core consists of 2 alpha, 1 beta, 1 beta' and 1 omega subunit. When a sigma factor is associated with the core the holoenzyme is formed, which can initiate transcription.

The catalysed reaction is RNA(n) + a ribonucleoside 5'-triphosphate = RNA(n+1) + diphosphate. Promotes RNA polymerase assembly. Latches the N- and C-terminal regions of the beta' subunit thereby facilitating its interaction with the beta and alpha subunits. The chain is DNA-directed RNA polymerase subunit omega from Pectobacterium carotovorum subsp. carotovorum (strain PC1).